A 529-amino-acid chain; its full sequence is Bifunctional purine biosynthesis protein PurH (529 aa).

One can recognise an MGS-like domain in the interval 1–148 (MQQRRPVRRA…KNHKDVAIVV (148 aa)).

This sequence belongs to the PurH family.

The catalysed reaction is (6R)-10-formyltetrahydrofolate + 5-amino-1-(5-phospho-beta-D-ribosyl)imidazole-4-carboxamide = 5-formamido-1-(5-phospho-D-ribosyl)imidazole-4-carboxamide + (6S)-5,6,7,8-tetrahydrofolate. The enzyme catalyses IMP + H2O = 5-formamido-1-(5-phospho-D-ribosyl)imidazole-4-carboxamide. It participates in purine metabolism; IMP biosynthesis via de novo pathway; 5-formamido-1-(5-phospho-D-ribosyl)imidazole-4-carboxamide from 5-amino-1-(5-phospho-D-ribosyl)imidazole-4-carboxamide (10-formyl THF route): step 1/1. It functions in the pathway purine metabolism; IMP biosynthesis via de novo pathway; IMP from 5-formamido-1-(5-phospho-D-ribosyl)imidazole-4-carboxamide: step 1/1. The polypeptide is Bifunctional purine biosynthesis protein PurH (Salmonella enteritidis PT4 (strain P125109)).